The sequence spans 634 residues: UPF0329 protein ECU11_2090 (634 aa).

Basic and acidic residues-rich tracts occupy residues 354-365 and 397-407; these read REEREKREESKG and GESKEEDRGEE. A disordered region spans residues 354–438; it reads REEREKREES…KGSGEKRISE (85 aa). A compositionally biased stretch (acidic residues) spans 408-417; that stretch reads GGVEAEDPLE.

The protein belongs to the UPF0329 family.

The sequence is that of UPF0329 protein ECU11_2090 from Encephalitozoon cuniculi (strain GB-M1) (Microsporidian parasite).